Here is a 4060-residue protein sequence, read N- to C-terminus: Replicase polyprotein 1a (4060 aa).

The CoV Nsp1 globular domain occupies 2-109 (FYNQVTLAVA…DFDVVFGHGA (108 aa)). Residues 112 to 358 (VVFVDKYMCG…NTLLSNQLRL (247 aa)) form the CoV Nsp2 N-terminal domain. Residues C245, C247, C264, and C265 each contribute to the Zn(2+) site. The interval 245–265 (CNCGSESWSVGAWDGYLSSCC) is C4. Positions 388 to 778 (YDDILTNNKP…LDVYNGFLET (391 aa)) constitute a CoV Nsp2 middle domain. In terms of domain architecture, CoV Nsp2 C-terminal spans 776-898 (LETVCSVAYT…LPVAFTKLAG (123 aa)). Residues 899 to 994 (GKISFSDDVI…VMISQWPISN (96 aa)) form the Ubiquitin-like 1 domain. The Peptidase C16 1 domain maps to 1021 to 1262 (EVDIIEQPFE…EAGEVKPFAV (242 aa)). C1062 serves as the catalytic For PL1-PRO activity. 4 residues coordinate Zn(2+): C1134, C1136, C1163, and C1165. The segment at 1134–1165 (CDCGKKFDDQVGCLFWIMPYTKLFQKGECCIC) adopts a C4-type 1 zinc-finger fold. Active-site for PL1-PRO activity residues include H1212 and D1225. Residues 1263-1421 (YKNVKFYLGD…AVLKFLDGLD (159 aa)) form the Macro domain. One can recognise a Ubiquitin-like 2 domain in the interval 1579-1633 (NDNVVLKITEDGINVKDVVVESSKSLGKQLGVVSDGVDSFEGVLPINTDTVLSVA). In terms of domain architecture, Peptidase C16 2 spans 1640–1886 (AFYGFEKAAL…VPTIVSEKIS (247 aa)). C1678 (for PL2-PRO activity) is an active-site residue. The Zn(2+) site is built by C1757, C1760, C1786, and H1788. A C4-type 2; atypical zinc finger spans residues 1757-1788 (CDICKSTVVEVKSAIVCASVLKDGCDVGFCPH). Residues H1836 and D1841 each act as for PL2-PRO activity in the active site. A run of 2 helical transmembrane segments spans residues 1903–1923 (DFVM…FSLL) and 1968–1988 (IVTL…VFMI). The segment at 1903-2131 (DFVMNNIVLF…LFVRHIIVGC (229 aa)) is HD1. In terms of domain architecture, 3Ecto spans 1983 to 2048 (ALVFMIVQFS…TSLVWKHIRD (66 aa)). 2 disulfide bridges follow: C1999/C2026 and C2017/C2023. Transmembrane regions (helical) follow at residues 2050–2070 (ILIS…GNMY), 2073–2093 (FGLL…LGFH), and 2111–2131 (FLAT…IVGC). Positions 2122-2212 (LFVRHIIVGC…VVKTAVQPTA (91 aa)) are Y1. Positions 2122-2461 (LFVRHIIVGC…PATSIVAKQG (340 aa)) constitute a CoV Nsp3 Y domain. The Zn(2+) site is built by H2126, C2131, C2136, C2139, C2172, H2175, C2179, and C2182. The segment at 2126 to 2139 (HIIVGCNNADCVAC) is ZF1. Residues 2172–2182 (CNKHNFFCVNC) are ZF2. The Y2 stretch occupies residues 2213–2302 (PAYVIIDKVD…LVNSELLSTL (90 aa)). A coV-Y region spans residues 2213 to 2461 (PAYVIIDKVD…PATSIVAKQG (249 aa)). The segment at 2303–2359 (SVDFNGVLHKAYVDVLCNSFFKELTANMSMAECKATLGLTVSDDDFVSAVANAHRYD) is Y3. The interval 2360–2461 (VLLSDLSFNN…PATSIVAKQG (102 aa)) is Y4. The next 5 helical transmembrane spans lie at 2468–2488 (YNFL…VSFI), 2727–2747 (GHML…FLVT), 2752–2769 (VFGD…ATLI), 2772–2792 (ISYV…LYFV), and 2800–2820 (AWIW…WWLL). Residues 2468-2820 (YNFLWYVCLF…YFLLIPWWLL (353 aa)) are HD2. Residues 2844 to 2939 (LFEGDKFIGT…PTISYNSTLQ (96 aa)) enclose the Nsp4C domain. The 303-residue stretch at 2940 to 3242 (SGLKKMAQPS…VKQMYGVNLQ (303 aa)) folds into the Peptidase C30 domain. Catalysis depends on for 3CL-PRO activity residues H2980 and C3083. Transmembrane regions (helical) follow at residues 3254–3274 (FLFS…TNTI), 3279–3299 (VILT…TMFL), 3303–3323 (FLFL…YNCV), 3342–3362 (VLQM…VVFL), 3376–3396 (FTYV…GDFL), 3397–3417 (SLLV…AIVF), and 3442–3462 (LVVY…LYWF). The segment at 3254-3462 (FLFSVFFTMF…CTYWGILYWF (209 aa)) is HD3. In terms of domain architecture, RdRp Nsp7 cofactor spans 3522–3604 (SKLTDLKCTN…SYFDNSSTLQ (83 aa)). Positions 3605–3799 (SVASSFVSMP…LNCERVVKLQ (195 aa)) constitute a RdRp Nsp8 cofactor domain. A Nsp9 ssRNA-binding domain is found at 3800 to 3908 (NNEIMPGKLK…GFIGATIRLQ (109 aa)). Positions 3909–4047 (AGKQTELAVN…DRTTIQSVDI (139 aa)) constitute an ExoN/MTase coactivator domain. Positions 3982, 3985, 3991, 3998, 4024, 4027, 4035, and 4037 each coordinate Zn(2+). 2 zinc fingers span residues 3982–3998 (CLYC…DGYC) and 4024–4037 (CNVC…GCAC).

This sequence belongs to the coronaviruses polyprotein 1ab family. In terms of assembly, 3CL-PRO exists as monomer and homodimer. Eight copies of nsp7 and eight copies of nsp8 assemble to form a heterohexadecamer. Nsp9 is a dimer. Nsp10 forms a dodecamer. Post-translationally, specific enzymatic cleavages in vivo by its own proteases yield mature proteins. 3CL-PRO and PL-PRO proteinases are autocatalytically processed.

The protein localises to the host membrane. The protein resides in the host cytoplasm. It is found in the host perinuclear region. It catalyses the reaction Thiol-dependent hydrolysis of ester, thioester, amide, peptide and isopeptide bonds formed by the C-terminal Gly of ubiquitin (a 76-residue protein attached to proteins as an intracellular targeting signal).. Functionally, the papain-like proteinase 1 (PLP1) and papain-like proteinase 2 (PLP2) are responsible for the cleavages located at the N-terminus of the replicase polyprotein. In addition, PLP2 possesses a deubiquitinating/deISGylating activity and processes both 'Lys-48'- and 'Lys-63'-linked polyubiquitin chains from cellular substrates. PLP2 also antagonizes innate immune induction of type I interferon by blocking the nuclear translocation of host IRF-3. Responsible for the majority of cleavages as it cleaves the C-terminus of replicase polyprotein at 11 sites. Recognizes substrates containing the core sequence [ILMVF]-Q-|-[SGACN]. Inhibited by the substrate-analog Cbz-Val-Asn-Ser-Thr-Leu-Gln-CMK. Also contains an ADP-ribose-1''-phosphate (ADRP)-binding function. Its function is as follows. Nsp7-nsp8 hexadecamer may possibly confer processivity to the polymerase, maybe by binding to dsRNA or by producing primers utilized by the latter. In terms of biological role, nsp9 is a ssRNA-binding protein. The sequence is that of Replicase polyprotein 1a from Homo sapiens (Human).